An 867-amino-acid polypeptide reads, in one-letter code: Leucine--tRNA ligase (867 aa).

Residues 42–52 carry the 'HIGH' region motif; it reads PYPSGKLHMGH. A 'KMSKS' region motif is present at residues 631-635; sequence KMSKS. ATP is bound at residue Lys-634.

This sequence belongs to the class-I aminoacyl-tRNA synthetase family.

The protein localises to the cytoplasm. The catalysed reaction is tRNA(Leu) + L-leucine + ATP = L-leucyl-tRNA(Leu) + AMP + diphosphate. The protein is Leucine--tRNA ligase of Dichelobacter nodosus (strain VCS1703A).